A 383-amino-acid polypeptide reads, in one-letter code: DNA dC-&gt;dU-editing enzyme APOBEC-3G (383 aa).

The essential for cytoplasmic localization stretch occupies residues 1–60 (MKPHFRNTVERMYRGTFFYNFNNRPILSRRNTVWLCYEVKTRGPSMPTWGAKIFRGQLYP). 2 CMP/dCMP-type deaminase domains span residues 29–138 (RRNT…LRIL) and 214–327 (GQRE…LRTL). Residue Thr-32 is modified to Phosphothreonine; by PKA. Zn(2+) is bound by residues His-65, Cys-97, and Cys-100. Positions 209–335 (KPWVSGQRET…TLHRDGAKIA (127 aa)) are necessary for homooligomerization. The segment at 213 to 215 (SGQ) is interaction with DNA. Thr-218 is subject to Phosphothreonine; by PKA and CAMK2. His-257 serves as a coordination point for Zn(2+). Glu-259 acts as the Proton donor in catalysis. 2 residues coordinate Zn(2+): Cys-287 and Cys-290. The interaction with DNA stretch occupies residues 312–319 (RIYDDQGR).

This sequence belongs to the cytidine and deoxycytidylate deaminase family. As to quaternary structure, homodimer. Homooligomer. Can bind RNA to form ribonucleoprotein complexes of high-molecular-mass (HMM) or low-molecular-mass (LMM). HMM is inactive and heterogeneous in protein composition because of binding nonselectively to cellular RNAs, which in turn are associated with variety of cellular proteins. The LMM form which is enzymatically active has few or no RNAs associated. Its ability to form homooligomer is distinct from its ability to assemble into HMM. Interacts with APOBEC3B, APOBEC3F, MOV10, AGO2, EIF4E, EIF4ENIF1, DCP2 and DDX6 in an RNA-dependent manner. Interacts with AGO1, AGO3 and PKA/PRKACA. The cofactor is Zn(2+).

It localises to the cytoplasm. The protein resides in the nucleus. Its subcellular location is the P-body. It catalyses the reaction a 2'-deoxycytidine in single-stranded DNA + H2O + H(+) = a 2'-deoxyuridine in single-stranded DNA + NH4(+). DNA deaminase (cytidine deaminase) which acts as an inhibitor of retrovirus replication and retrotransposon mobility. After the penetration of retroviral nucleocapsids into target cells of infection and the initiation of reverse transcription, it can induce the conversion of cytosine to uracil in the minus-sense single-strand viral DNA, leading to G-to-A hypermutations in the subsequent plus-strand viral DNA. The resultant detrimental levels of mutations in the proviral genome, along with a deamination-independent mechanism that works prior to the proviral integration, together exert efficient antiretroviral effects in infected target cells. Selectively targets single-stranded DNA and does not deaminate double-stranded DNA or single- or double-stranded RNA. This Erythrocebus patas (Red guenon) protein is DNA dC-&gt;dU-editing enzyme APOBEC-3G (APOBEC3G).